We begin with the raw amino-acid sequence, 79 residues long: U24-theraphotoxin-Cg1a (79 aa).

A signal peptide spans 1-19 (MRVLFIIAVLALISVGCYA). Positions 20–44 (SEMKDRSSRNEVLSAIFAIEEPQER) are excised as a propeptide. 3 disulfide bridges follow: Cys46–Cys61, Cys53–Cys66, and Cys60–Cys73. Trp78 carries the tryptophan amide modification.

The protein belongs to the neurotoxin 10 (Hwtx-1) family. 35 (Jztx-27) subfamily. As to expression, expressed by the venom gland.

It localises to the secreted. Probable ion channel inhibitor. In Chilobrachys guangxiensis (Chinese earth tiger tarantula), this protein is U24-theraphotoxin-Cg1a.